The sequence spans 644 residues: MRLSELTHPNQLHGLSIAELEDVARQIRERHLEVVSTSGGHLGPGLGVVELTLALYQTLDLDHDRVVWDVGHQAYPHKLITGRYGDFNTLRQQGGVAGYLKRCESSFDHFGAGHASTSISAALGMAVARERRGESFKCVAVIGDGALTGGIALEAINHAGHMPNTPFLVVLNDNDMSISPPVGALSTHLNRMRHSAPVQFISDSVEERVKSLPFMGGELPAELDLLKGSMRRLSVPKVGAVFEELGFTYMGPIDGHDIERMVRTFETAHKVGGPVLVHVVTTKGKGYPYAEADQVGYHAQSAFDLSTGKALPSKGKKPPSYSKVFGETLIKLCQQDSTVVGITAAMATGTGLDLLQKAVPEQYIDVGIAEQHAVTLAAGMACEGLKPVLAIYSTFLQRAFDQLIHDVGIQNLPVTFVMDRAGIVGADGPTHQGQYDISYFRAIPNFTVMAPKDEAELQRMLVTCLQHQGPAALRIPRGSGEGVPLLDEGWKPLAIGRGEVLCEGDDLLIVAYGVMVPAAMITAQLLQEAGIKATVINARFLRPLDQALIHPLARRIGSVVTMEEGALAGGFGAAVVESLSDQDVLVPTFRIGIPDQLVDHASPQQSREALGLTPTQMSERIQEHFCLNSKPSLVGQEAPQALST.

Residues His72 and Gly113–Ala115 each bind thiamine diphosphate. A Mg(2+)-binding site is contributed by Asp144. Thiamine diphosphate contacts are provided by residues Gly145 to Ala146, Asn174, Tyr287, and Glu370. Asn174 contacts Mg(2+).

It belongs to the transketolase family. DXPS subfamily. In terms of assembly, homodimer. It depends on Mg(2+) as a cofactor. The cofactor is thiamine diphosphate.

The enzyme catalyses D-glyceraldehyde 3-phosphate + pyruvate + H(+) = 1-deoxy-D-xylulose 5-phosphate + CO2. The protein operates within metabolic intermediate biosynthesis; 1-deoxy-D-xylulose 5-phosphate biosynthesis; 1-deoxy-D-xylulose 5-phosphate from D-glyceraldehyde 3-phosphate and pyruvate: step 1/1. Catalyzes the acyloin condensation reaction between C atoms 2 and 3 of pyruvate and glyceraldehyde 3-phosphate to yield 1-deoxy-D-xylulose-5-phosphate (DXP). The polypeptide is 1-deoxy-D-xylulose-5-phosphate synthase (Prochlorococcus marinus (strain MIT 9313)).